A 262-amino-acid chain; its full sequence is Acyl-[acyl-carrier-protein]--UDP-N-acetylglucosamine O-acyltransferase (262 aa).

This sequence belongs to the transferase hexapeptide repeat family. LpxA subfamily. As to quaternary structure, homotrimer.

Its subcellular location is the cytoplasm. It carries out the reaction a (3R)-hydroxyacyl-[ACP] + UDP-N-acetyl-alpha-D-glucosamine = a UDP-3-O-[(3R)-3-hydroxyacyl]-N-acetyl-alpha-D-glucosamine + holo-[ACP]. It participates in glycolipid biosynthesis; lipid IV(A) biosynthesis; lipid IV(A) from (3R)-3-hydroxytetradecanoyl-[acyl-carrier-protein] and UDP-N-acetyl-alpha-D-glucosamine: step 1/6. Involved in the biosynthesis of lipid A, a phosphorylated glycolipid that anchors the lipopolysaccharide to the outer membrane of the cell. The polypeptide is Acyl-[acyl-carrier-protein]--UDP-N-acetylglucosamine O-acyltransferase (Erwinia tasmaniensis (strain DSM 17950 / CFBP 7177 / CIP 109463 / NCPPB 4357 / Et1/99)).